Here is a 147-residue protein sequence, read N- to C-terminus: Monothiol glutaredoxin-S5 (147 aa).

Residues 49–146 form the Glutaredoxin domain; the sequence is AAEVRRAVAE…PILKKAGALW (98 aa). Position 69 (cysteine 69) interacts with [2Fe-2S] cluster. Residues 144 to 147 carry the Responsive for interaction with TGA factors motif; it reads ALWL.

Belongs to the glutaredoxin family. CC-type subfamily.

The protein localises to the cytoplasm. It localises to the nucleus. Its function is as follows. May only reduce GSH-thiol disulfides, but not protein disulfides. The chain is Monothiol glutaredoxin-S5 (GRXS5) from Oryza sativa subsp. japonica (Rice).